The chain runs to 362 residues: C-C chemokine receptor type 10 (362 aa).

The Extracellular segment spans residues 1 to 52 (MGTEATEQVSWGHYSGDEEDAYSAEPLPELCYKADVQAFSRAFQPSVSLTVA). Residues 53–68 (ALGLAGNGLVLATHLA) form a helical membrane-spanning segment. Residues 69-78 (ARRAARSPTS) lie on the Cytoplasmic side of the membrane. The helical transmembrane segment at 79–99 (AHLLQLALADLLLALTLPFAA) threads the bilayer. The Extracellular portion of the chain corresponds to 100 to 114 (AGALQGWSLGSATCR). Cysteine 113 and cysteine 191 are oxidised to a cystine. The helical transmembrane segment at 115-136 (TISGLYSASFHAGFLFLACISA) threads the bilayer. The Cytoplasmic segment spans residues 137–159 (DRYVAIARALPAGPRPSTPGRAH). The chain crosses the membrane as a helical span at residues 160-179 (LVSVIVWLLSLLLALPALLF). The Extracellular portion of the chain corresponds to 180-203 (SQDGQREGQRRCRLIFPEGLTQTV). A helical membrane pass occupies residues 204 to 225 (KGASAVAQVALGFALPLGVMVA). Residues 226-247 (CYALLGRTLLAARGPERRRALR) lie on the Cytoplasmic side of the membrane. A helical membrane pass occupies residues 248–269 (VVVALVAAFVVLQLPYSLALLL). The Extracellular segment spans residues 270-290 (DTADLLAARERSCPASKRKDV). A helical membrane pass occupies residues 291–313 (ALLVTSGLALARCGLNPVLYAFL). The Cytoplasmic portion of the chain corresponds to 314–362 (GLRFRQDLRRLLRGGSCPSGPQPRRGCPRRPRLSSCSAPTETHSLSWDN). Low complexity predominate over residues 328–338 (GSCPSGPQPRR). Positions 328–362 (GSCPSGPQPRRGCPRRPRLSSCSAPTETHSLSWDN) are disordered. Residues 351–362 (APTETHSLSWDN) are compositionally biased toward polar residues.

The protein belongs to the G-protein coupled receptor 1 family. Expressed at high levels in adult testis, small intestine, fetal lung, fetal kidney. Weaker expression was observed in many other adult tissues including spleen, thymus, lymph node, Peyer patches, colon, heart, ovary, peripheral blood lymphocytes, thyroid and spinal cord. Also expressed by melanocytes, dermal fibroblasts, dermal microvascular endothelial cells. Also detected in T-cells and in skin-derived Langerhans cells.

It localises to the cell membrane. Receptor for chemokines SCYA27 and SCYA28. Subsequently transduces a signal by increasing the intracellular calcium ions level and stimulates chemotaxis in a pre-B cell line. This is C-C chemokine receptor type 10 (CCR10) from Homo sapiens (Human).